Consider the following 364-residue polypeptide: DNA replication and repair protein RecF (364 aa).

30–37 (GNNAQGKT) contacts ATP.

The protein belongs to the RecF family.

It localises to the cytoplasm. Functionally, the RecF protein is involved in DNA metabolism; it is required for DNA replication and normal SOS inducibility. RecF binds preferentially to single-stranded, linear DNA. It also seems to bind ATP. This chain is DNA replication and repair protein RecF, found in Clostridium botulinum (strain Loch Maree / Type A3).